The chain runs to 937 residues: Isoleucine--tRNA ligase (937 aa).

The short motif at 58 to 68 (PYANGSIHIGH) is the 'HIGH' region element. L-isoleucyl-5'-AMP is bound at residue Glu-561. Positions 602–606 (KMSKS) match the 'KMSKS' region motif. Position 605 (Lys-605) interacts with ATP. The Zn(2+) site is built by Cys-900, Cys-903, Cys-920, and Cys-923.

This sequence belongs to the class-I aminoacyl-tRNA synthetase family. IleS type 1 subfamily. Monomer. The cofactor is Zn(2+).

Its subcellular location is the cytoplasm. The catalysed reaction is tRNA(Ile) + L-isoleucine + ATP = L-isoleucyl-tRNA(Ile) + AMP + diphosphate. Functionally, catalyzes the attachment of isoleucine to tRNA(Ile). As IleRS can inadvertently accommodate and process structurally similar amino acids such as valine, to avoid such errors it has two additional distinct tRNA(Ile)-dependent editing activities. One activity is designated as 'pretransfer' editing and involves the hydrolysis of activated Val-AMP. The other activity is designated 'posttransfer' editing and involves deacylation of mischarged Val-tRNA(Ile). This Pectobacterium carotovorum subsp. carotovorum (strain PC1) protein is Isoleucine--tRNA ligase.